The chain runs to 297 residues: tRNA pseudouridine synthase B (297 aa).

D39 acts as the Nucleophile in catalysis.

Belongs to the pseudouridine synthase TruB family. Type 1 subfamily.

The catalysed reaction is uridine(55) in tRNA = pseudouridine(55) in tRNA. Its function is as follows. Responsible for synthesis of pseudouridine from uracil-55 in the psi GC loop of transfer RNAs. The polypeptide is tRNA pseudouridine synthase B (Lactobacillus gasseri (strain ATCC 33323 / DSM 20243 / BCRC 14619 / CIP 102991 / JCM 1131 / KCTC 3163 / NCIMB 11718 / NCTC 13722 / AM63)).